Here is a 276-residue protein sequence, read N- to C-terminus: MISRTLLKRTVPASRLLRSFTTSNVRLSAHEEDLVNVNNLPRPKPTENYVPLINPTEKYKVQIEELHKFGTYIMSCLPKYIQQFSVWKDELTIYVAPSAIRPVMSYLKNHTSCQFKAVMDITAADYPSRTNRFDVVYNLLSDRHNSRIRVKTYANETSPVPSVTPLFNGANWYERETYDLFGVFFVGHPDLRRIMTDYGFEGHPLRKDFPTTGYTEVRYDEEKKRVIYEPLELTQAWRNFTVGSSVWEPVGEGKDFTPESFKLPTPQPEPEQEEKK.

The interval 248–276 is disordered; it reads EPVGEGKDFTPESFKLPTPQPEPEQEEKK.

Belongs to the complex I 30 kDa subunit family. As to quaternary structure, complex I is composed of about 30 different subunits. This is a component of the iron-sulfur protein fraction.

The protein localises to the mitochondrion inner membrane. It catalyses the reaction a ubiquinone + NADH + 5 H(+)(in) = a ubiquinol + NAD(+) + 4 H(+)(out). In terms of biological role, core subunit of the mitochondrial membrane respiratory chain NADH dehydrogenase (Complex I) that is believed to belong to the minimal assembly required for catalysis. Complex I functions in the transfer of electrons from NADH to the respiratory chain. The immediate electron acceptor for the enzyme is believed to be ubiquinone. Essential for N-alkane assimilation. The protein is Probable NADH-ubiquinone oxidoreductase 30.4 kDa subunit, mitochondrial (ALI1) of Candida maltosa (Yeast).